Here is a 398-residue protein sequence, read N- to C-terminus: 1-deoxy-D-xylulose 5-phosphate reductoisomerase (398 aa).

Positions 21, 22, 23, 24, 47, 50, and 127 each coordinate NADPH. K128 lines the 1-deoxy-D-xylulose 5-phosphate pocket. Position 129 (E129) interacts with NADPH. Mn(2+) is bound at residue D151. 4 residues coordinate 1-deoxy-D-xylulose 5-phosphate: S152, E153, S177, and H200. E153 contributes to the Mn(2+) binding site. Residue G206 participates in NADPH binding. The 1-deoxy-D-xylulose 5-phosphate site is built by S213, N218, K219, and E222. E222 contacts Mn(2+).

The protein belongs to the DXR family. It depends on Mg(2+) as a cofactor. Mn(2+) serves as cofactor.

It catalyses the reaction 2-C-methyl-D-erythritol 4-phosphate + NADP(+) = 1-deoxy-D-xylulose 5-phosphate + NADPH + H(+). It participates in isoprenoid biosynthesis; isopentenyl diphosphate biosynthesis via DXP pathway; isopentenyl diphosphate from 1-deoxy-D-xylulose 5-phosphate: step 1/6. Functionally, catalyzes the NADPH-dependent rearrangement and reduction of 1-deoxy-D-xylulose-5-phosphate (DXP) to 2-C-methyl-D-erythritol 4-phosphate (MEP). This Mycolicibacterium smegmatis (strain ATCC 700084 / mc(2)155) (Mycobacterium smegmatis) protein is 1-deoxy-D-xylulose 5-phosphate reductoisomerase.